A 739-amino-acid chain; its full sequence is Transcription activator of gluconeogenesis MCYG_04674 (739 aa).

Positions 1-33 are enriched in polar residues; the sequence is MSPHQTTGQESDNMAVNGENAQASSQYIQLNSE. Residues 1–62 form a disordered region; sequence MSPHQTTGQE…PSRPKRKKAK (62 aa). A compositionally biased stretch (basic and acidic residues) spans 40–55; it reads AAEKKAAAAKAKDPSR. The segment at residues 65–93 is a DNA-binding region (zn(2)-C6 fungal-type); it reads CYACQRGHLTCGDERPCQRCIKRGFQDAC. 5 disordered regions span residues 174-223, 264-308, 380-420, 537-574, and 639-668; these read GPEN…QFNS, DTPP…GDSG, SRQN…HKNA, NHNV…STTA, and AQNN…GQRR. Polar residues-rich tracts occupy residues 267–284 and 397–411; these read PSDN…SSGT and PVVS…NLNI. Residues 547–557 show a composition bias toward low complexity; sequence GLLTGSTSRGS. The segment covering 562-574 has biased composition (polar residues); it reads PYSSDQFNSSTTA. Over residues 653–664 the composition is skewed to low complexity; sequence NSSSNGTTSTGR.

The protein belongs to the ERT1/acuK family.

It localises to the nucleus. Transcription factor which regulates nonfermentable carbon utilization. Activator of gluconeogenetic genes. The sequence is that of Transcription activator of gluconeogenesis MCYG_04674 from Arthroderma otae (strain ATCC MYA-4605 / CBS 113480) (Microsporum canis).